We begin with the raw amino-acid sequence, 453 residues long: Phenylalanine-4-hydroxylase (453 aa).

A2 bears the N-acetylalanine mark. At S16 the chain carries Phosphoserine; by PKA. Positions S36–E114 constitute an ACT domain. Fe cation is bound by residues H285, H290, and E330.

The protein belongs to the biopterin-dependent aromatic amino acid hydroxylase family. Homodimer and homotetramer. The cofactor is Fe(2+). Phosphorylation at Ser-16 increases basal activity and facilitates activation by the substrate phenylalanine.

The catalysed reaction is (6R)-L-erythro-5,6,7,8-tetrahydrobiopterin + L-phenylalanine + O2 = (4aS,6R)-4a-hydroxy-L-erythro-5,6,7,8-tetrahydrobiopterin + L-tyrosine. The protein operates within amino-acid degradation; L-phenylalanine degradation; acetoacetate and fumarate from L-phenylalanine: step 1/6. With respect to regulation, N-terminal region of PAH is thought to contain allosteric binding sites for phenylalanine and to constitute an 'inhibitory' domain that regulates the activity of a catalytic domain in the C-terminal portion of the molecule. Catalyzes the hydroxylation of L-phenylalanine to L-tyrosine. The polypeptide is Phenylalanine-4-hydroxylase (Pah) (Rattus norvegicus (Rat)).